We begin with the raw amino-acid sequence, 348 residues long: Heptaprenyl diphosphate synthase component 2 (348 aa).

Positions 73, 76, and 105 each coordinate isopentenyl diphosphate. Residues Asp-112 and Asp-116 each contribute to the Mg(2+) site. Arg-121 contributes to the all-trans-hexaprenyl diphosphate binding site. Residue Arg-122 coordinates isopentenyl diphosphate. Residues Lys-198, Thr-199, and Gln-236 each coordinate all-trans-hexaprenyl diphosphate.

The protein belongs to the FPP/GGPP synthase family. Heterodimer of component I and II. It depends on Mg(2+) as a cofactor.

The enzyme catalyses 4 isopentenyl diphosphate + (2E,6E)-farnesyl diphosphate = all-trans-heptaprenyl diphosphate + 4 diphosphate. In terms of biological role, supplies heptaprenyl diphosphate, the precursor for the side chain of the isoprenoid quinone menaquinone-7 (MQ-7). This chain is Heptaprenyl diphosphate synthase component 2 (hepT), found in Bacillus subtilis (strain 168).